The primary structure comprises 85 residues: Toxin TdNa8 (85 aa).

An N-terminal signal peptide occupies residues 1-19 (MNYLTLIAAASLLTAGTES). The LCN-type CS-alpha/beta domain maps to 21 to 81 (KDGYPVKEGD…AAIKGYGRCR (61 aa)). Intrachain disulfides connect C31–C80, C35–C56, C42–C63, and C46–C65. Residue P82 is modified to Proline amide.

It belongs to the long (4 C-C) scorpion toxin superfamily. Sodium channel inhibitor family. Alpha subfamily. In terms of tissue distribution, expressed by the venom gland.

It is found in the secreted. Alpha toxins bind voltage-independently at site-3 of sodium channels (Nav) and inhibit the inactivation of the activated channels, thereby blocking neuronal transmission. This chain is Toxin TdNa8, found in Tityus discrepans (Venezuelan scorpion).